The sequence spans 79 residues: Calcium/calmodulin-dependent protein kinase II inhibitor 2 (79 aa).

Residues 1 to 21 (MSEILPYGEDKMGRFGADPEG) are disordered. The interval 43–69 (KRPPKLGQIGRAKRVVIEDDRIDDVLK) is inhibitory domain.

It belongs to the CAMK2N family. In terms of assembly, interacts with CAMK2A and CAMK2B in the presence of Ca(2+)/calmodulin or after autophosphorylation.

The protein localises to the nucleus. It localises to the cytoplasm. The protein resides in the cytosol. Its subcellular location is the synapse. Functionally, potent and specific cellular inhibitor of CaM-kinase II (CAMK2). Traps Ca(2+)/calmodulin on CAMK2. This is Calcium/calmodulin-dependent protein kinase II inhibitor 2 (Camk2n2) from Mus musculus (Mouse).